Here is a 102-residue protein sequence, read N- to C-terminus: Small ribosomal subunit protein uS10 (102 aa).

This sequence belongs to the universal ribosomal protein uS10 family. Part of the 30S ribosomal subunit.

Its function is as follows. Involved in the binding of tRNA to the ribosomes. The protein is Small ribosomal subunit protein uS10 of Streptococcus thermophilus (strain ATCC BAA-491 / LMD-9).